Here is a 240-residue protein sequence, read N- to C-terminus: Small ribosomal subunit protein uS2c (240 aa).

It belongs to the universal ribosomal protein uS2 family.

Its subcellular location is the plastid. It is found in the chloroplast. The sequence is that of Small ribosomal subunit protein uS2c (rps2) from Cycas taitungensis (Prince sago).